A 290-amino-acid polypeptide reads, in one-letter code: Ribosomal protein L11 methyltransferase (290 aa).

S-adenosyl-L-methionine contacts are provided by Thr136, Gly159, Asp181, and Asn228.

Belongs to the methyltransferase superfamily. PrmA family.

The protein resides in the cytoplasm. The enzyme catalyses L-lysyl-[protein] + 3 S-adenosyl-L-methionine = N(6),N(6),N(6)-trimethyl-L-lysyl-[protein] + 3 S-adenosyl-L-homocysteine + 3 H(+). Methylates ribosomal protein L11. This is Ribosomal protein L11 methyltransferase from Allorhizobium ampelinum (strain ATCC BAA-846 / DSM 112012 / S4) (Agrobacterium vitis (strain S4)).